A 29-amino-acid polypeptide reads, in one-letter code: Potassium channel toxin alpha-KTx 20.1 (29 aa).

Intrachain disulfides connect cysteine 2–cysteine 20, cysteine 7–cysteine 24, and cysteine 11–cysteine 26.

It belongs to the short scorpion toxin superfamily. Potassium channel inhibitor family. Alpha-KTx 20 subfamily. Expressed by the venom gland.

It is found in the secreted. Reduces potassium currents through Kv1.2/KCNA2 and Kv1.3/KCNA3 voltage-gated potassium channels. This Tityus trivittatus (Argentinean scorpion) protein is Potassium channel toxin alpha-KTx 20.1.